The following is a 266-amino-acid chain: Hydroxyethylthiazole kinase (266 aa).

Met43 serves as a coordination point for substrate. The ATP site is built by Arg119 and Thr166. Residue Gly193 coordinates substrate.

Belongs to the Thz kinase family. Mg(2+) serves as cofactor.

The catalysed reaction is 5-(2-hydroxyethyl)-4-methylthiazole + ATP = 4-methyl-5-(2-phosphooxyethyl)-thiazole + ADP + H(+). The protein operates within cofactor biosynthesis; thiamine diphosphate biosynthesis; 4-methyl-5-(2-phosphoethyl)-thiazole from 5-(2-hydroxyethyl)-4-methylthiazole: step 1/1. Catalyzes the phosphorylation of the hydroxyl group of 4-methyl-5-beta-hydroxyethylthiazole (THZ). The protein is Hydroxyethylthiazole kinase of Methanococcus maripaludis (strain C5 / ATCC BAA-1333).